A 970-amino-acid polypeptide reads, in one-letter code: Testis anion transporter 1 (970 aa).

The Cytoplasmic segment spans residues 1–95; that stretch reads MAQLERSAIS…YRLKDWLLGD (95 aa). Residues 96–116 form a helical membrane-spanning segment; that stretch reads LLAGISVGLVQVPQGLTLSLL. The Extracellular segment spans residues 117–119; that stretch reads ARQ. The helical transmembrane segment at 120–140 threads the bilayer; it reads LIPPLNIAYAAFCSSVIYVIF. At 141–146 the chain is on the cytoplasmic side; the sequence is GSCHQM. Residues 147 to 167 traverse the membrane as a helical segment; it reads SIGSFFLVSALLINVLKVSPF. The Extracellular portion of the chain corresponds to 168–202; sequence NNGQLVMGSFVKNEFSAPSYLMGYNKSLSVVATTT. A glycan (N-linked (GlcNAc...) asparagine) is linked at Asn-192. The chain crosses the membrane as a helical span at residues 203 to 223; it reads FLTGIIQLIMGVLGLGFIATY. Over 224–232 the chain is Cytoplasmic; sequence LPESAMSAY. A helical membrane pass occupies residues 233-253; the sequence is LAAVALHIMLSQLTFIFGIMI. Residues 254-270 lie on the Extracellular side of the membrane; sequence SFHAGPISFFYDIINYC. Residues 271 to 291 form a helical membrane-spanning segment; the sequence is VALPKANSTSILVFLTVVVAL. The Cytoplasmic portion of the chain corresponds to 292-307; sequence RINKCIRISFNQYPIE. Residues 308 to 328 form a helical membrane-spanning segment; that stretch reads FPMELFLIIGFTVIANKISMA. Residues 329–355 lie on the Extracellular side of the membrane; sequence TETSQTLIDMIPYSFLLPVTPDFSLLP. The chain crosses the membrane as a helical span at residues 356–376; that stretch reads KIILQAFSLSLVSSFLLIFLG. The Cytoplasmic segment spans residues 377–392; sequence KKIASLHNYSVNSNQD. Residues 393 to 413 form a helical membrane-spanning segment; that stretch reads LIAIGLCNVVSSFFRSCVFTG. At 414–429 the chain is on the extracellular side; it reads AIARTIIQDKSGGRQQ. A helical transmembrane segment spans residues 430 to 450; that stretch reads FASLVGAGVMLLLMVKMGHFF. At 451-452 the chain is on the cytoplasmic side; it reads YT. A helical transmembrane segment spans residues 453 to 473; it reads LPNAVLAGIILSNVIPYLETI. Residues 474–497 lie on the Extracellular side of the membrane; sequence SNLPSLWRQDQYDCALWMMTFSSS. Residues 498–518 form a helical membrane-spanning segment; the sequence is IFLGLDIGLIISVVSAFFITT. Residues 519-970 are Cytoplasmic-facing; sequence VRSHRAKILL…SPEGNSNEDV (452 aa). An STAS domain is found at 543-795; sequence DYREIITIPG…LSVHDAVLFA (253 aa). Positions 664-970 are interaction with RACGAP1; sequence TVSSVSQKNQ…SPEGNSNEDV (307 aa). Residues 858–868 are compositionally biased toward acidic residues; the sequence is SELDLELESEQ. A disordered region spans residues 858 to 970; the sequence is SELDLELESE…SPEGNSNEDV (113 aa). A compositionally biased stretch (basic and acidic residues) spans 877 to 898; the sequence is DLDRELEPEMEPKAETETKTQT. The span at 938–948 shows a compositional bias: low complexity; sequence STQSQTQTRTW.

The protein belongs to the SLC26A/SulP transporter (TC 2.A.53) family. As to quaternary structure, interacts with RACGAP1. Interacts with CFTR; stimulates anion transport activity of CFTR. In terms of processing, N-glycosylated. In terms of tissue distribution, expression observed exclusively in testis, restricted to the meiotic phase of the germ cell. Abundant expression located in the seminiferous tubules, concentrated on the luminal side of the tubuli harboring the spermatocytes and spermatids.

The protein resides in the membrane. It carries out the reaction sulfate(out) + chloride(in) = sulfate(in) + chloride(out). The enzyme catalyses oxalate(in) + chloride(out) = oxalate(out) + chloride(in). Its activity is regulated as follows. Activity is inhibited by 4,4'-Di-isothiocyanatostilbene-2,2'-disulfonic acid (DIDS - an inhibitor of several anion channels and transporters) and gluconate. Its function is as follows. Antiporter that mediates the exchange of sulfate and oxalate against chloride ions across a membrane. Stimulates anion transport activity of CFTR. May cooperate with CFTR in the regulation of chloride and bicarbonate ions fluxes required for activation of the ADCY10/PKA pathway during sperm motility and sperm capacitation. May play a role in sperm tail differentiation and motility and hence male fertility. This chain is Testis anion transporter 1, found in Homo sapiens (Human).